Reading from the N-terminus, the 84-residue chain is Extender of the chronological lifespan protein 2 (84 aa).

This sequence belongs to the ecl1 family.

The protein localises to the nucleus. In terms of biological role, involved in chronological cell aging. The protein is Extender of the chronological lifespan protein 2 (ecl2) of Schizosaccharomyces pombe (strain 972 / ATCC 24843) (Fission yeast).